A 373-amino-acid chain; its full sequence is Hydrogenase maturation factor HypD (373 aa).

Cys41, Cys69, and Cys72 together coordinate Fe cation.

This sequence belongs to the HypD family. In terms of assembly, monomer. Interacts with HypC. Forms a complex with HypC, or HybG, and HypE. [4Fe-4S] cluster is required as a cofactor.

It functions in the pathway protein modification; [NiFe] hydrogenase maturation. Involved in the maturation of [NiFe] hydrogenases. Involved in the biosynthesis of the Fe(CN)(2)CO cofactor. HypD may act as a scaffold on which the Fe(CN)(2)CO cofactor is formed. In complex with HypC, accepts the cyanide ligand generated by HypF and HypE, and also coordinates the carbon monoxide ligand. Required for the formation of all three hydrogenase isoenzymes. This is Hydrogenase maturation factor HypD from Escherichia coli (strain K12).